The primary structure comprises 410 residues: F-box protein At5g36730 (410 aa).

The F-box domain maps to 1–46; it reads MAMSNLPRDLLEEVLSRVPVKSIAAVRSTCKNWNSLTYGQSFTKKL.

This chain is F-box protein At5g36730, found in Arabidopsis thaliana (Mouse-ear cress).